The primary structure comprises 618 residues: Mitochondrial Rho GTPase 1 (618 aa).

Topologically, residues 1-592 are cytoplasmic; it reads MKKDVRILLV…TQADLKSSTF (592 aa). The Miro 1 domain maps to 2 to 168; that stretch reads KKDVRILLVG…FYYAQKAVLH (167 aa). The GTP site is built by Arg14, Gly16, Lys17, Thr18, and Ser19. Thr18 is a Mg(2+) binding site. Mg(2+)-binding residues include Pro35 and Asp57. Ser59 lines the GTP pocket. Lys92 is subject to N6-acetyllysine. GTP contacts are provided by Asn118, Lys119, Asp121, Ala149, and Lys150. A Glycyl lysine isopeptide (Lys-Gly) (interchain with G-Cter in ubiquitin) cross-link involves residue Lys153. An EF-hand 1 domain is found at 184–219; that stretch reads ACIKALTRIFKISDQDNDGTLNDAELNFFQRICFNT. Ca(2+) contacts are provided by Asp197, Asp199, Asp201, Thr203, and Glu208. Residue Lys235 forms a Glycyl lysine isopeptide (Lys-Gly) (interchain with G-Cter in ubiquitin) linkage. The EF-hand 2 domain maps to 304 to 339; sequence HAYLFLQSTFDKHDLDRDCALSPDELKDLFKVFPYI. 5 residues coordinate Ca(2+): Asp317, Asp319, Asp321, Ala323, and Glu328. Residues 416-579 enclose the Miro 2 domain; the sequence is RNVFRCNVIG…FVKLTTMAMY (164 aa). GTP contacts are provided by Asn428, Cys429, Gly430, Lys431, Ser432, Gly433, and Lys447. Position 428 (Asn428) interacts with Mg(2+). 15 residues coordinate GDP: Asn428, Cys429, Gly430, Lys431, Ser432, Gly433, Lys447, Lys454, Ser477, Glu478, Lys528, Asp530, Thr558, Cys559, and Asn560. Residues Lys528, Asp530, Thr558, and Cys559 each contribute to the GTP site. Residue Lys572 forms a Glycyl lysine isopeptide (Lys-Gly) (interchain with G-Cter in ubiquitin) linkage. The helical; Anchor for type IV membrane protein transmembrane segment at 593–615 threads the bilayer; the sequence is WLRASFGATVFAVLGFAMYKALL. The Mitochondrial intermembrane portion of the chain corresponds to 616–618; that stretch reads KQR.

This sequence belongs to the mitochondrial Rho GTPase family. Homodimer. Interacts with the kinesin-binding proteins TRAK1/OIP106 and TRAK2/GRIF1, forming a link between mitochondria and the trafficking apparatus of the microtubules. Interacts with RAP1GDS1. Interacts with ARMCX1. Found in a complex with KIF5B, OGT, RHOT2 and TRAK1. Post-translationally, ubiquitinated by PRKN during mitophagy, leading to its degradation and enhancement of mitophagy. Deubiquitinated by USP30. In terms of processing, acetylation on Lys-92 decreases sensitivity of mitochondrial transport to elevated Ca(2+) levels, increases mitochondrial transport and promotes axon growth. Deacetylated by HDAC6 which blocks mitochondrial transport and mediates axon growth inhibition. As to expression, ubiquitously expressed. Expressed at high level in heart and skeletal muscle.

The protein resides in the mitochondrion outer membrane. The enzyme catalyses GTP + H2O = GDP + phosphate + H(+). It catalyses the reaction ATP + H2O = ADP + phosphate + H(+). It carries out the reaction UTP + H2O = UDP + phosphate + H(+). Atypical mitochondrial nucleoside-triphosphatase (NTPase) involved in mitochondrial trafficking. Probably involved in control of anterograde transport of mitochondria and their subcellular distribution. Promotes mitochondrial fission during high calcium conditions. Can hydrolyze GTP, ATP and UTP. The polypeptide is Mitochondrial Rho GTPase 1 (RHOT1) (Homo sapiens (Human)).